We begin with the raw amino-acid sequence, 676 residues long: Envelope fusion protein (676 aa).

The N-terminal stretch at 1 to 16 (MSPLALIVLLAWHATA) is a signal peptide. Residues Asn-76 and Asn-87 are each glycosylated (N-linked (GlcNAc...) asparagine; by host). Positions 169–215 (ARELHDLAKTSNALNEQIKEVTDELVNIAKFEEHKQCLERQRDDLCG) form a coiled coil. N-linked (GlcNAc...) asparagine; by host glycosylation is found at Asn-266, Asn-469, Asn-505, and Asn-548. A helical membrane pass occupies residues 577–597 (CATAEAVVACVVLFLVALLLF). Residue Asn-628 is glycosylated (N-linked (GlcNAc...) asparagine; by host).

N-glycosylated.

Its subcellular location is the virion membrane. The protein resides in the host cell membrane. In terms of biological role, envelope glycoprotein which mediates the fusion of viral and host endosomal membranes leading to virus entry into the host cell. The sequence is that of Envelope fusion protein from Lepidoptera (butterflies and moths).